A 364-amino-acid polypeptide reads, in one-letter code: Coproporphyrin III ferrochelatase (364 aa).

Arg-29 and Tyr-118 together coordinate Fe-coproporphyrin III. Fe(2+) is bound by residues His-169 and Glu-250.

It belongs to the ferrochelatase family.

It is found in the cytoplasm. The catalysed reaction is Fe-coproporphyrin III + 2 H(+) = coproporphyrin III + Fe(2+). Its pathway is porphyrin-containing compound metabolism; protoheme biosynthesis. Involved in coproporphyrin-dependent heme b biosynthesis. Catalyzes the insertion of ferrous iron into coproporphyrin III to form Fe-coproporphyrin III. This Streptococcus pneumoniae (strain Taiwan19F-14) protein is Coproporphyrin III ferrochelatase.